Here is a 507-residue protein sequence, read N- to C-terminus: Sperm-associated antigen 6 (507 aa).

8 ARM repeats span residues 31–70 (PQNI…RLAN), 73–112 (DDLA…AVGK), 115–154 (PQLA…YIAR), 157–196 (TELS…DISK), 199–238 (PELA…QIAK), 241–280 (VDLA…EIAK), 325–365 (ENLA…QLGR), and 402–441 (KAIK…KVLP).

Interacts with SPAG16 and SPAG17. As to expression, highly expressed in testis. Not detected in prostate, ovary, spleen, thymus, small intestine, colon and peripheral blood leukocytes.

It localises to the cytoplasm. The protein resides in the cytoskeleton. The protein localises to the cell projection. Its subcellular location is the cilium. It is found in the flagellum. It localises to the cilium axoneme. Functionally, important for structural integrity of the central apparatus in the sperm tail and for flagellar motility. The chain is Sperm-associated antigen 6 (Spag6) from Mus musculus (Mouse).